The following is an 85-amino-acid chain: Large ribosomal subunit protein bL27 (85 aa).

Positions Met-1–Arg-20 are disordered.

It belongs to the bacterial ribosomal protein bL27 family.

In Haemophilus influenzae (strain ATCC 51907 / DSM 11121 / KW20 / Rd), this protein is Large ribosomal subunit protein bL27.